The chain runs to 195 residues: Small ribosomal subunit protein uS5 (195 aa).

The interval 1–20 is disordered; it reads MAREREGGGRGRREDREERD. The region spanning 23-86 is the S5 DRBM domain; that stretch reads FVDKLVHINR…EAAKRGLIRV (64 aa). Residues 161-195 form a disordered region; sequence DSPRSVAARRGIKVSTLQSRRRDADPADQSEAAVA.

This sequence belongs to the universal ribosomal protein uS5 family. Part of the 30S ribosomal subunit. Contacts proteins S4 and S8.

Its function is as follows. With S4 and S12 plays an important role in translational accuracy. In terms of biological role, located at the back of the 30S subunit body where it stabilizes the conformation of the head with respect to the body. This Methylobacterium radiotolerans (strain ATCC 27329 / DSM 1819 / JCM 2831 / NBRC 15690 / NCIMB 10815 / 0-1) protein is Small ribosomal subunit protein uS5.